A 349-amino-acid polypeptide reads, in one-letter code: Nicotinate-nucleotide--dimethylbenzimidazole phosphoribosyltransferase (349 aa).

Glutamate 316 (proton acceptor) is an active-site residue.

It belongs to the CobT family.

It carries out the reaction 5,6-dimethylbenzimidazole + nicotinate beta-D-ribonucleotide = alpha-ribazole 5'-phosphate + nicotinate + H(+). It participates in nucleoside biosynthesis; alpha-ribazole biosynthesis; alpha-ribazole from 5,6-dimethylbenzimidazole: step 1/2. Functionally, catalyzes the synthesis of alpha-ribazole-5'-phosphate from nicotinate mononucleotide (NAMN) and 5,6-dimethylbenzimidazole (DMB). This Photorhabdus laumondii subsp. laumondii (strain DSM 15139 / CIP 105565 / TT01) (Photorhabdus luminescens subsp. laumondii) protein is Nicotinate-nucleotide--dimethylbenzimidazole phosphoribosyltransferase.